Reading from the N-terminus, the 491-residue chain is Putative mannan endo-1,4-beta-mannosidase 5 (491 aa).

The signal sequence occupies residues 1-31; that stretch reads METSYREEEARRKASLLHCIFFFLLGALAMA. Tryptophan 134 and asparagine 248 together coordinate substrate. Glutamate 249 functions as the Proton donor in the catalytic mechanism. Tyrosine 330 is a substrate binding site. Glutamate 372 acts as the Nucleophile in catalysis. An N-linked (GlcNAc...) asparagine glycan is attached at asparagine 385. Position 416 (tryptophan 416) interacts with substrate. The N-linked (GlcNAc...) asparagine glycan is linked to asparagine 471.

It belongs to the glycosyl hydrolase 5 (cellulase A) family. Expression not detected.

Its subcellular location is the secreted. It catalyses the reaction Random hydrolysis of (1-&gt;4)-beta-D-mannosidic linkages in mannans, galactomannans and glucomannans.. The chain is Putative mannan endo-1,4-beta-mannosidase 5 (MAN5) from Oryza sativa subsp. japonica (Rice).